Here is a 684-residue protein sequence, read N- to C-terminus: MSAQDFLVELGTEELPPKTLVSLADAFLAGIEKGLAGAGLTYSAKQVYAAPRRLAVLITALATQQPDRSVNLDGPPRQAAFDADGNPTQAALGFAKKCGVDLSEIDQSGPKLRYSQTILGKPTTSLLPTIVEDSLNDLPIAKRMRWGARKEEFVRPTQWLVMLFGDQVVDCTILAQSAGRHSRGHRFHHPEDVRISSPAGYLSDLRAANVLADFNERRQIISKRVEELASQQEGTAIVPPSLLDEVAGLVEWPVPLVCSFEERFLDVPQEALITTMQDNQKYFCLLDADGKLLPRFITVANIESKDPAQIIAGNEKVVRPRLTDAEFFFKQDKKQKLETFNDRLKNVVFQAQLGSVFDKAERVSKLAAYIAPRIGGDAQRAARAGLLSKCDLSSEMVGEFPEMQGIAGYYYAKADGEAEDVALALNEQYMPRGAGAELPTTLTGAAVAIADKLDTLVGIFGIGMLPTGSKDPYALRRAALGILRILIEKKLDLNLVETVKFAVTQFGAKVKPAGLAEQVLEFIFDRLRARYEDEGVEVAVYLSVRALQPASALDFDQRVQAVQAFRKLPQAAALAAVNKRVSNLLSKAEGSIAQTVEPKYFDNANEFSLYSAIQQADHAVQPMAAERQYSESLARLAMLREPVDAFFEAVMVNAEDANVRANRYALLARLRGLFLGVADISLLG.

The protein belongs to the class-II aminoacyl-tRNA synthetase family. As to quaternary structure, tetramer of two alpha and two beta subunits.

The protein localises to the cytoplasm. The enzyme catalyses tRNA(Gly) + glycine + ATP = glycyl-tRNA(Gly) + AMP + diphosphate. The protein is Glycine--tRNA ligase beta subunit of Pseudomonas syringae pv. tomato (strain ATCC BAA-871 / DC3000).